Reading from the N-terminus, the 406-residue chain is MERPDLKNPDLYTQQVPHDIFARLRREEPVYWNPESDGSGFWAVLRHKDIIEVSRQPLLFSSAYENGGHRIFNENEVGLTNAGEAAVGVPFISLDPPVHTQYRKVIMPALSPARLGDIEQRIRVRAEALIERIPLGEEVDLVPLLSAPLPLLTLAELLGLDPDCWYELYNWTNAFVGEDDPEFRKSPEDMAKVLGEFMGFCQELFESRRANPGPDIATLLANAEINGQPVALRDFIGNLTLTLVGGNETTRNSISHTIVTLSQQPDQWDILRQRPELLKTATAEMVRHASPVLHMRRTAMEDTEIGGQAIAKGDKVVLWYASGNRDESVFSDADRFDVTRTGVQHVGFGSGQHVCVGSRLAEMQLRVVFEILSTRVKRFELCSKSRRFRSNFLNGLKNLNVVLVPK.

Cysteine 355 contacts heme.

The protein belongs to the cytochrome P450 family. The cofactor is heme.

It catalyses the reaction linalool + 2 reduced [NADPH--hemoprotein reductase] + 2 O2 = (6E)-8-oxolinalool + 2 oxidized [NADPH--hemoprotein reductase] + 3 H2O + 2 H(+). Its pathway is terpene metabolism; linalool degradation. In terms of biological role, catalyzes the 8-methyl hydroxylation of linalool. In Pseudomonas putida (Arthrobacter siderocapsulatus), this protein is Linalool 8-monooxygenase (linC).